Here is a 208-residue protein sequence, read N- to C-terminus: Small ribosomal subunit protein eS8 (208 aa).

A disordered region spans residues 1–37; it reads MGISRDNWHKRRKTGGKRKPYHKKRKYEPGRPAANTK. A compositionally biased stretch (basic residues) spans 8–26; that stretch reads WHKRRKTGGKRKPYHKKRK.

This sequence belongs to the eukaryotic ribosomal protein eS8 family. As to quaternary structure, component of the small ribosomal subunit. Identified in a IGF2BP1-dependent mRNP granule complex containing untranslated mRNAs. Part of the small subunit (SSU) processome, composed of more than 70 proteins and the RNA chaperone small nucleolar RNA (snoRNA) U3.

The protein localises to the cytoplasm. It localises to the membrane. It is found in the nucleus. The protein resides in the nucleolus. In terms of biological role, component of the small ribosomal subunit. The ribosome is a large ribonucleoprotein complex responsible for the synthesis of proteins in the cell. Part of the small subunit (SSU) processome, first precursor of the small eukaryotic ribosomal subunit. During the assembly of the SSU processome in the nucleolus, many ribosome biogenesis factors, an RNA chaperone and ribosomal proteins associate with the nascent pre-rRNA and work in concert to generate RNA folding, modifications, rearrangements and cleavage as well as targeted degradation of pre-ribosomal RNA by the RNA exosome. This chain is Small ribosomal subunit protein eS8 (rps8), found in Xenopus laevis (African clawed frog).